A 359-amino-acid chain; its full sequence is Uroporphyrinogen decarboxylase (359 aa).

Residues 36-40, D85, Y160, S215, and H338 each bind substrate; that span reads RQAGR.

The protein belongs to the uroporphyrinogen decarboxylase family. As to quaternary structure, homodimer.

Its subcellular location is the cytoplasm. It catalyses the reaction uroporphyrinogen III + 4 H(+) = coproporphyrinogen III + 4 CO2. Its pathway is porphyrin-containing compound metabolism; protoporphyrin-IX biosynthesis; coproporphyrinogen-III from 5-aminolevulinate: step 4/4. Its function is as follows. Catalyzes the decarboxylation of four acetate groups of uroporphyrinogen-III to yield coproporphyrinogen-III. This Corynebacterium efficiens (strain DSM 44549 / YS-314 / AJ 12310 / JCM 11189 / NBRC 100395) protein is Uroporphyrinogen decarboxylase.